Here is a 431-residue protein sequence, read N- to C-terminus: Acetylornithine aminotransferase (431 aa).

Residues 118 to 119 (GA) and Phe-157 contribute to the pyridoxal 5'-phosphate site. Arg-160 provides a ligand contact to N(2)-acetyl-L-ornithine. Pyridoxal 5'-phosphate is bound at residue 251 to 254 (DEVQ). Lys-284 bears the N6-(pyridoxal phosphate)lysine mark. Ser-313 contacts N(2)-acetyl-L-ornithine. Thr-314 is a binding site for pyridoxal 5'-phosphate.

The protein belongs to the class-III pyridoxal-phosphate-dependent aminotransferase family. ArgD subfamily. In terms of assembly, homodimer. Pyridoxal 5'-phosphate is required as a cofactor.

The protein localises to the cytoplasm. The catalysed reaction is N(2)-acetyl-L-ornithine + 2-oxoglutarate = N-acetyl-L-glutamate 5-semialdehyde + L-glutamate. Its pathway is amino-acid biosynthesis; L-arginine biosynthesis; N(2)-acetyl-L-ornithine from L-glutamate: step 4/4. The protein is Acetylornithine aminotransferase of Bifidobacterium longum (strain NCC 2705).